The chain runs to 64 residues: MSGREGGKKKPLKQPKKQAKEMDEEDKAFKQKQKEEQKKLEELKAKAAGKGPLATGGIKKSGKK.

The disordered stretch occupies residues 1-64 (MSGREGGKKK…TGGIKKSGKK (64 aa)). A coiled-coil region spans residues 21 to 50 (EMDEEDKAFKQKQKEEQKKLEELKAKAAGK). Residues 27 to 45 (KAFKQKQKEEQKKLEELKA) show a composition bias toward basic and acidic residues. At S61 the chain carries ADP-ribosylserine.

It belongs to the TMA7 family.

The protein is Translation machinery-associated protein 7 (TMA7) of Bos taurus (Bovine).